Consider the following 332-residue polypeptide: Anthranilate phosphoribosyltransferase (332 aa).

5-phospho-alpha-D-ribose 1-diphosphate contacts are provided by residues Gly78, 81–82 (GD), Thr86, 88–91 (NVST), 106–114 (KHGNRAASS), and Ala118. Gly78 is a binding site for anthranilate. Position 90 (Ser90) interacts with Mg(2+). Asn109 provides a ligand contact to anthranilate. Position 164 (Arg164) interacts with anthranilate. Mg(2+)-binding residues include Asp223 and Glu224.

This sequence belongs to the anthranilate phosphoribosyltransferase family. Homodimer. Mg(2+) is required as a cofactor.

The catalysed reaction is N-(5-phospho-beta-D-ribosyl)anthranilate + diphosphate = 5-phospho-alpha-D-ribose 1-diphosphate + anthranilate. It functions in the pathway amino-acid biosynthesis; L-tryptophan biosynthesis; L-tryptophan from chorismate: step 2/5. Functionally, catalyzes the transfer of the phosphoribosyl group of 5-phosphorylribose-1-pyrophosphate (PRPP) to anthranilate to yield N-(5'-phosphoribosyl)-anthranilate (PRA). In Sphingopyxis alaskensis (strain DSM 13593 / LMG 18877 / RB2256) (Sphingomonas alaskensis), this protein is Anthranilate phosphoribosyltransferase.